Reading from the N-terminus, the 66-residue chain is UPF0337 protein SAG0619 (66 aa).

The disordered stretch occupies residues 1 to 22; the sequence is MSQEKLKSKLDQAKGGAKEGFG.

The protein belongs to the UPF0337 (CsbD) family.

The sequence is that of UPF0337 protein SAG0619 from Streptococcus agalactiae serotype V (strain ATCC BAA-611 / 2603 V/R).